Here is a 72-residue protein sequence, read N- to C-terminus: Translational regulator CsrA (72 aa).

Belongs to the CsrA/RsmA family. As to quaternary structure, homodimer; the beta-strands of each monomer intercalate to form a hydrophobic core, while the alpha-helices form wings that extend away from the core.

The protein localises to the cytoplasm. Functionally, a translational regulator that binds mRNA to regulate translation initiation and/or mRNA stability. Usually binds in the 5'-UTR at or near the Shine-Dalgarno sequence preventing ribosome-binding, thus repressing translation. Its main target seems to be the major flagellin gene, while its function is anatagonized by FliW. This Ruminiclostridium cellulolyticum (strain ATCC 35319 / DSM 5812 / JCM 6584 / H10) (Clostridium cellulolyticum) protein is Translational regulator CsrA.